Reading from the N-terminus, the 385-residue chain is Neuropeptide Y receptor type 2 (385 aa).

Topologically, residues 1-54 (MGPLEAIGEENQTDEMKMELFTKLYLPRYTTPVSELALDPKPELKDSTTLVEVQ) are extracellular. N-linked (GlcNAc...) asparagine glycosylation occurs at N11. The chain crosses the membrane as a helical span at residues 55-75 (IILIFAYCSIILLGVIGNSLV). The Cytoplasmic portion of the chain corresponds to 76-90 (IHVIIKFKSMRTVTN). Residues 91–111 (FFIANLAVADLLVNTLCLPFT) traverse the membrane as a helical segment. Over 112-128 (LVYTLLGEWKLGPVLCH) the chain is Extracellular. Residues C127 and C207 are joined by a disulfide bond. Residues 129-149 (LVPYAQALAVHVSTVTLTVIA) traverse the membrane as a helical segment. At 150–169 (LDRHRCIVYHLESKISKRIS) the chain is on the cytoplasmic side. The helical transmembrane segment at 170 to 190 (FLIIGVAWAVSALLASPLAIF) threads the bilayer. Over 191 to 221 (REYSLIEIIPDFKIVVCSEKWPGEGQLNYGT) the chain is Extracellular. Residues 222 to 242 (IYSVSMLLIQYVLPLAIISYA) form a helical membrane-spanning segment. At 243 to 273 (YTRIWTKLKNHVSPGAGNDHYHHRRQKTTKM) the chain is on the cytoplasmic side. The chain crosses the membrane as a helical span at residues 274 to 294 (LVCVVVVFAVSWLPFHAFQLV). At 295-308 (SDIDSQVLDLKEYK) the chain is on the extracellular side. The helical transmembrane segment at 309–329 (LIYTVFHVIAMCSTFANPLLY) threads the bilayer. The Cytoplasmic segment spans residues 330 to 385 (GWMNNNYRTAFLTAFQCEQRLDSIHPEVSAAFKARKKLEAKKSQFPGDSFTQPTNV). Residue C346 is the site of S-palmitoyl cysteine attachment.

The protein belongs to the G-protein coupled receptor 1 family.

It localises to the cell membrane. Receptor for neuropeptide Y and peptide YY. This chain is Neuropeptide Y receptor type 2 (NPY2R), found in Gallus gallus (Chicken).